A 139-amino-acid chain; its full sequence is Aspartate 1-decarboxylase (139 aa).

Serine 25 (schiff-base intermediate with substrate; via pyruvic acid) is an active-site residue. Serine 25 carries the post-translational modification Pyruvic acid (Ser). Threonine 57 is a substrate binding site. The Proton donor role is filled by tyrosine 58. 73-75 is a binding site for substrate; it reads GAA. Residues 116–139 are disordered; sequence ELGSDPAHAPEGSGLTSPRSLTFA. Over residues 129–139 the composition is skewed to polar residues; sequence GLTSPRSLTFA.

It belongs to the PanD family. Heterooctamer of four alpha and four beta subunits. The cofactor is pyruvate. In terms of processing, is synthesized initially as an inactive proenzyme, which is activated by self-cleavage at a specific serine bond to produce a beta-subunit with a hydroxyl group at its C-terminus and an alpha-subunit with a pyruvoyl group at its N-terminus.

It is found in the cytoplasm. The catalysed reaction is L-aspartate + H(+) = beta-alanine + CO2. It functions in the pathway cofactor biosynthesis; (R)-pantothenate biosynthesis; beta-alanine from L-aspartate: step 1/1. Its function is as follows. Catalyzes the pyruvoyl-dependent decarboxylation of aspartate to produce beta-alanine. This Nocardia farcinica (strain IFM 10152) protein is Aspartate 1-decarboxylase.